A 160-amino-acid polypeptide reads, in one-letter code: 6,7-dimethyl-8-ribityllumazine synthase (160 aa).

5-amino-6-(D-ribitylamino)uracil-binding positions include tryptophan 26, 59–61 (AVE), and 81–83 (VVI). 86-87 (GT) provides a ligand contact to (2S)-2-hydroxy-3-oxobutyl phosphate. Histidine 89 serves as the catalytic Proton donor. Residue phenylalanine 114 participates in 5-amino-6-(D-ribitylamino)uracil binding. Arginine 128 serves as a coordination point for (2S)-2-hydroxy-3-oxobutyl phosphate.

This sequence belongs to the DMRL synthase family.

The catalysed reaction is (2S)-2-hydroxy-3-oxobutyl phosphate + 5-amino-6-(D-ribitylamino)uracil = 6,7-dimethyl-8-(1-D-ribityl)lumazine + phosphate + 2 H2O + H(+). It participates in cofactor biosynthesis; riboflavin biosynthesis; riboflavin from 2-hydroxy-3-oxobutyl phosphate and 5-amino-6-(D-ribitylamino)uracil: step 1/2. In terms of biological role, catalyzes the formation of 6,7-dimethyl-8-ribityllumazine by condensation of 5-amino-6-(D-ribitylamino)uracil with 3,4-dihydroxy-2-butanone 4-phosphate. This is the penultimate step in the biosynthesis of riboflavin. The sequence is that of 6,7-dimethyl-8-ribityllumazine synthase from Frankia casuarinae (strain DSM 45818 / CECT 9043 / HFP020203 / CcI3).